We begin with the raw amino-acid sequence, 341 residues long: Very-long-chain 3-oxoacyl-CoA reductase (341 aa).

A helical membrane pass occupies residues 15–35 (VVTAFSVIGIVFTILKFTSFA). Residues V61, D115, N142, K177, Y216, K220, V249, and S251 each coordinate NADP(+). Y216 functions as the Proton donor in the catalytic mechanism. K220 acts as the Lowers pKa of active site Tyr in catalysis.

It belongs to the short-chain dehydrogenases/reductases (SDR) family.

Its subcellular location is the endoplasmic reticulum membrane. It carries out the reaction a very-long-chain (3R)-3-hydroxyacyl-CoA + NADP(+) = a very-long-chain 3-oxoacyl-CoA + NADPH + H(+). The protein operates within lipid metabolism; fatty acid biosynthesis. In terms of biological role, component of the microsomal membrane bound fatty acid elongation system, which produces the 26-carbon very long-chain fatty acids (VLCFA) from palmitate. Catalyzes the reduction of the 3-ketoacyl-CoA intermediate that is formed in each cycle of fatty acid elongation. VLCFAs serve as precursors for ceramide and sphingolipids. This chain is Very-long-chain 3-oxoacyl-CoA reductase, found in Schizosaccharomyces pombe (strain 972 / ATCC 24843) (Fission yeast).